We begin with the raw amino-acid sequence, 302 residues long: Ornithine carbamoyltransferase (302 aa).

Residues 52–55, Q79, R103, and 130–133 each bind carbamoyl phosphate; these read STRT and HPCQ. L-ornithine is bound by residues N161, D221, and 225 to 226; that span reads SM. Residues 261-262 and R289 contribute to the carbamoyl phosphate site; that span reads CL.

Belongs to the aspartate/ornithine carbamoyltransferase superfamily. OTCase family.

The protein resides in the cytoplasm. The enzyme catalyses carbamoyl phosphate + L-ornithine = L-citrulline + phosphate + H(+). It participates in amino-acid biosynthesis; L-arginine biosynthesis; L-arginine from L-ornithine and carbamoyl phosphate: step 1/3. Its function is as follows. Reversibly catalyzes the transfer of the carbamoyl group from carbamoyl phosphate (CP) to the N(epsilon) atom of ornithine (ORN) to produce L-citrulline. This chain is Ornithine carbamoyltransferase, found in Methanospirillum hungatei JF-1 (strain ATCC 27890 / DSM 864 / NBRC 100397 / JF-1).